Here is a 692-residue protein sequence, read N- to C-terminus: A-kinase anchor protein 8 (692 aa).

The interval 1 to 195 (MDQGYGGYGA…FMRGRGQGRF (195 aa)) is interaction with MCM2. The tract at residues 1–210 (MDQGYGGYGA…PGTFMRSDPF (210 aa)) is interaction with DPY30. The residue at position 109 (Arg-109) is an Asymmetric dimethylarginine; alternate. Arg-109 bears the Omega-N-methylarginine; alternate mark. The interaction with DDX5 stretch occupies residues 109–201 (RGGSGGGGEG…QGRFQDRSNP (93 aa)). Phosphoserine is present on Ser-112. 3 disordered regions span residues 168–203 (GQYS…NPGT), 231–254 (GGRG…SMAP), and 269–382 (STMP…RTRD). A compositionally biased stretch (basic and acidic residues) spans 172–182 (ECRDPARERGS). Phosphoserine is present on Ser-199. Arg-233 and Arg-277 each carry omega-N-methylarginine. Basic and acidic residues-rich tracts occupy residues 281 to 297 (RMRD…DRFG) and 314 to 323 (PDTKLARVDS). The Bipartite nuclear localization signal signature appears at 289-306 (KRRGFDRFGPDGTGRKRK). A Glycyl lysine isopeptide (Lys-Gly) (interchain with G-Cter in SUMO2) cross-link involves residue Lys-317. Residues Ser-323, Ser-328, and Ser-339 each carry the phosphoserine modification. The segment covering 324 to 334 (EGDFSENDDAA) has biased composition (acidic residues). Residues 387 to 450 (RIQFACSVCK…NKKIEKRRQE (64 aa)) are involved in chromatin-binding. 2 consecutive C2H2 AKAP95-type zinc fingers follow at residues 392–414 (CSVC…SKFH) and 481–504 (CLAC…SVDH). The involved in condensin complex recruitment stretch occupies residues 525–569 (SVLNNRHIVKMLEKYLKGEDPFTSETVDPEMEGDDNLGGEDKKET). Residues 545–571 (PFTSETVDPEMEGDDNLGGEDKKETPE) are disordered. The segment covering 551-562 (VDPEMEGDDNLG) has biased composition (acidic residues). Residue Lys-567 forms a Glycyl lysine isopeptide (Lys-Gly) (interchain with G-Cter in SUMO2) linkage. An RII-binding region spans residues 572–589 (EVAADVLAEVITAAVRAV). Residues 576 to 593 (DVLAEVITAAVRAVDGEG) form a required for interaction with MYCBP region. The disordered stretch occupies residues 592 to 692 (EGAPAPESSG…AESKDAVPTE (101 aa)). Positions 634 to 646 (AHEKGVPKARSEA) are enriched in basic and acidic residues. Ser-662 carries the phosphoserine modification. Low complexity predominate over residues 663–675 (AQTRVAPAPAAAD). The segment covering 683-692 (AESKDAVPTE) has biased composition (basic and acidic residues). Ser-685 carries the phosphoserine modification.

Belongs to the AKAP95 family. As to quaternary structure, binds to the PKA RII-alpha regulatory subunit PRKAR2A (phosphorylated at 'Thr-54') during mitosis. Interacts (via C-terminus) with FIGN. Interacts with NCAPD2, CCND1, MCM2, RPS6KA1, PDE4A. Interacts with CCND3, CCNE1, DDX5, CASP3. Interacts with NFKB1; detetcted in the cytoplasm. Interacts with MYCBP; MYCBP is translocated to the nucleus and the interaction prevents the association of the PKA catalytic subunit leading to suppression of PKA activity. Interacts with DPY30; mediating AKAP8 association with at least the MLL4/WBP7 HMT complex. Interacts with HDAC3; increased during mitosis. Interacts with GJA1; in the nucleus and in the nuclear membrane; the nuclear association increases with progress of cell cycle G1, S and G2 phase and decreases in M phase. Post-translationally, phosphorylated on tyrosine residues probably by SRC subfamily protein kinases; multiple phosphorylation is leading to dissociation from nuclear structures implicated in chromatin structural changes. In terms of tissue distribution, highly expressed in heart, liver, skeletal muscle, kidney and pancreas. Expressed in mature dendritic cells.

The protein resides in the nucleus. The protein localises to the nucleus matrix. It is found in the nucleolus. Its subcellular location is the cytoplasm. In terms of biological role, anchoring protein that mediates the subcellular compartmentation of cAMP-dependent protein kinase (PKA type II). Acts as an anchor for a PKA-signaling complex onto mitotic chromosomes, which is required for maintenance of chromosomes in a condensed form throughout mitosis. Recruits condensin complex subunit NCAPD2 to chromosomes required for chromatin condensation; the function appears to be independent from PKA-anchoring. May help to deliver cyclin D/E to CDK4 to facilitate cell cycle progression. Required for cell cycle G2/M transition and histone deacetylation during mitosis. In mitotic cells recruits HDAC3 to the vicinity of chromatin leading to deacetylation and subsequent phosphorylation at 'Ser-10' of histone H3; in this function may act redundantly with AKAP8L. Involved in nuclear retention of RPS6KA1 upon ERK activation thus inducing cell proliferation. May be involved in regulation of DNA replication by acting as scaffold for MCM2. Enhances HMT activity of the KMT2 family MLL4/WBP7 complex and is involved in transcriptional regulation. In a teratocarcinoma cell line is involved in retinoic acid-mediated induction of developmental genes implicating H3 'Lys-4' methylation. May be involved in recruitment of active CASP3 to the nucleus in apoptotic cells. May act as a carrier protein of GJA1 for its transport to the nucleus. May play a repressive role in the regulation of rDNA transcription. Preferentially binds GC-rich DNA in vitro. In cells, associates with ribosomal RNA (rRNA) chromatin, preferentially with rRNA promoter and transcribed regions. Involved in modulation of Toll-like receptor signaling. Required for the cAMP-dependent suppression of TNF-alpha in early stages of LPS-induced macrophage activation; the function probably implicates targeting of PKA to NFKB1. This chain is A-kinase anchor protein 8 (AKAP8), found in Homo sapiens (Human).